A 155-amino-acid chain; its full sequence is MYCPFCHAEETKVVDSRLVADGAQVRRRRECLECHERFTTFETAELIMPLIIKRDGRREPFHIDNLRSGMLRALEKRPVSVDDLEKAIISITEEIRRRGEREIDSQMVGELVMKELFRLDHVAYVRFASVYKRFKDVSDFRQTIDQMKNEDKEKS.

Residues 3 to 34 (CPFCHAEETKVVDSRLVADGAQVRRRRECLEC) fold into a zinc finger. Residues 49–139 (PLIIKRDGRR…VYKRFKDVSD (91 aa)) enclose the ATP-cone domain.

This sequence belongs to the NrdR family. Zn(2+) is required as a cofactor.

In terms of biological role, negatively regulates transcription of bacterial ribonucleotide reductase nrd genes and operons by binding to NrdR-boxes. This chain is Transcriptional repressor NrdR, found in Legionella pneumophila (strain Lens).